A 476-amino-acid chain; its full sequence is MKVRVRLAPSPTGTLHIGTARTAVFNWLFARHQGGQFLLRIEDTDKERSKPEFTTNILEGLKWLGLNWDEQPIIQSQHVDDHRAAIQKLLDRDLAYRCYASETELEAMRETQKAQGKAPRYDNRHRDLNPEQEAAFQSEGRTAVVRFRIDDDATISWKDLVRGPMHWKGSDLGGDMVISRRAPAKEIGDPLYNLVVVVDDAAMSISHVIRGEDHIANTAKQLLIYEALGLPIPQFAHTPLILNSEGRKLSKRDGVTSISDFQAMGYTAEAMANYMSLLGWSVPEGTDERFTLQQAATVFSFDRVNKAGAKFDWDKLNWLNSQVLHDLPKDQLLHELKPLWSKAGWALPEENWCLDLAELLGPSLTLLKDGVDQARPFFEEPTLQADGLEQLAVDGAKAGLSNLLDQLDRTSWDGFDVKQAQQLLTNAAQAANVKKGVIMKSLRAALLGRLQGPDLITTWGLLARIGQDLNRLRRCL.

The 'HIGH' region motif lies at 9 to 19 (PSPTGTLHIGT). The 'KMSKS' region motif lies at 248 to 252 (KLSKR). Lysine 251 is an ATP binding site.

The protein belongs to the class-I aminoacyl-tRNA synthetase family. Glutamate--tRNA ligase type 1 subfamily. Monomer.

It localises to the cytoplasm. It catalyses the reaction tRNA(Glu) + L-glutamate + ATP = L-glutamyl-tRNA(Glu) + AMP + diphosphate. Functionally, catalyzes the attachment of glutamate to tRNA(Glu) in a two-step reaction: glutamate is first activated by ATP to form Glu-AMP and then transferred to the acceptor end of tRNA(Glu). This Prochlorococcus marinus (strain MIT 9313) protein is Glutamate--tRNA ligase.